Here is a 165-residue protein sequence, read N- to C-terminus: Ubiquitin-fold modifier-conjugating enzyme 1 (165 aa).

Residue C117 is the Glycyl thioester intermediate of the active site.

This sequence belongs to the ubiquitin-conjugating enzyme family. UFC1 subfamily.

Functionally, E2-like enzyme which forms an intermediate with UFM1 via a thioester linkage. The protein is Ubiquitin-fold modifier-conjugating enzyme 1 of Brugia malayi (Filarial nematode worm).